We begin with the raw amino-acid sequence, 103 residues long: Large ribosomal subunit protein bL21 (103 aa).

The protein belongs to the bacterial ribosomal protein bL21 family. Part of the 50S ribosomal subunit. Contacts protein L20.

This protein binds to 23S rRNA in the presence of protein L20. In Ectopseudomonas mendocina (strain ymp) (Pseudomonas mendocina), this protein is Large ribosomal subunit protein bL21.